The chain runs to 198 residues: Glycerol-3-phosphate acyltransferase (198 aa).

Transmembrane regions (helical) follow at residues 10–30 (LIPI…WILV), 57–77 (GISF…ILIL), 86–106 (IMYL…WFLF), 118–138 (VVLS…AVVF), and 160–180 (AVTE…IVLI).

This sequence belongs to the PlsY family. As to quaternary structure, probably interacts with PlsX.

Its subcellular location is the cell inner membrane. It catalyses the reaction an acyl phosphate + sn-glycerol 3-phosphate = a 1-acyl-sn-glycero-3-phosphate + phosphate. The protein operates within lipid metabolism; phospholipid metabolism. Catalyzes the transfer of an acyl group from acyl-phosphate (acyl-PO(4)) to glycerol-3-phosphate (G3P) to form lysophosphatidic acid (LPA). This enzyme utilizes acyl-phosphate as fatty acyl donor, but not acyl-CoA or acyl-ACP. The chain is Glycerol-3-phosphate acyltransferase from Anaplasma marginale (strain St. Maries).